A 291-amino-acid chain; its full sequence is Alpha/beta-gliadin A-II (291 aa).

Positions Met1–Ala20 are cleaved as a signal peptide. Low complexity predominate over residues Asn32 to Gln55. Disordered stretches follow at residues Asn32–Gln120 and Gln227–Gln250. Pro residues-rich tracts occupy residues Pro56–Ser71 and Phe81–Gln104. Low complexity-rich tracts occupy residues Pro105 to Gln120 and Gln227 to Gln237. Positions Pro238 to Gln250 are enriched in polar residues.

The protein belongs to the gliadin/glutenin family. Substrate of transglutaminase.

Its function is as follows. Gliadin is the major seed storage protein in wheat. The chain is Alpha/beta-gliadin A-II from Triticum aestivum (Wheat).